A 395-amino-acid chain; its full sequence is MAQREWVEKDFYQELGVSSDASPEEIKRAYRKLARDLHPDANPGNPAAGERFKAVSEAHNVLSDPAKRKEYDETRRLFAGGGFGGRRFDSGFGGGFGGFGVGGDGAEFNLNDLFDAASRTGGTTIGDLFGGLFGRGGSARPSRPRRGNDLETETELDFVEAAKGVAMPLRLTSPAPCTNCHGSGARPGTSPKVCPTCNGSGVINRNQGAFGFSEPCTDCRGSGSIIEHPCEECKGTGVTTRTRTINVRIPPGVEDGQRIRLAGQGEAGLRGAPSGDLYVTVHVRPDKIFGRDGDDLTVTVPVSFTELALGSTLSVPTLDGTVGVRVPKGTADGRILRVRGRGVPKRSGGSGDLLVTVKVAVPPNLAGAAQEALEAYAAAERSSGFNPRAGWAGNR.

The J domain maps to 10 to 75 (DFYQELGVSS…AKRKEYDETR (66 aa)). The segment at 164-242 (GVAMPLRLTS…CKGTGVTTRT (79 aa)) adopts a CR-type zinc-finger fold. Cysteine 177, cysteine 180, cysteine 194, cysteine 197, cysteine 216, cysteine 219, cysteine 230, and cysteine 233 together coordinate Zn(2+). CXXCXGXG motif repeat units follow at residues 177–184 (CTNCHGSG), 194–201 (CPTCNGSG), 216–223 (CTDCRGSG), and 230–237 (CEECKGTG).

It belongs to the DnaJ family. In terms of assembly, homodimer. Zn(2+) serves as cofactor.

Its subcellular location is the cytoplasm. Functionally, participates actively in the response to hyperosmotic and heat shock by preventing the aggregation of stress-denatured proteins and by disaggregating proteins, also in an autonomous, DnaK-independent fashion. Unfolded proteins bind initially to DnaJ; upon interaction with the DnaJ-bound protein, DnaK hydrolyzes its bound ATP, resulting in the formation of a stable complex. GrpE releases ADP from DnaK; ATP binding to DnaK triggers the release of the substrate protein, thus completing the reaction cycle. Several rounds of ATP-dependent interactions between DnaJ, DnaK and GrpE are required for fully efficient folding. Also involved, together with DnaK and GrpE, in the DNA replication of plasmids through activation of initiation proteins. The polypeptide is Chaperone protein DnaJ 1 (Mycobacterium bovis (strain ATCC BAA-935 / AF2122/97)).